An 80-amino-acid chain; its full sequence is Putative membrane protein insertion efficiency factor (80 aa).

Residues 61-80 are disordered; sequence KTGKDPVPDHFSLKRNQEGE. Residues 62-80 show a composition bias toward basic and acidic residues; that stretch reads TGKDPVPDHFSLKRNQEGE.

This sequence belongs to the UPF0161 family.

The protein localises to the cell membrane. In terms of biological role, could be involved in insertion of integral membrane proteins into the membrane. This chain is Putative membrane protein insertion efficiency factor, found in Streptococcus pneumoniae serotype 2 (strain D39 / NCTC 7466).